The sequence spans 62 residues: Temporin-HN1 (62 aa).

A signal peptide spans 1–22; it reads MFTLKKSLLLLLFLGTINLSLS. A propeptide spanning residues 23 to 44 is cleaved from the precursor; that stretch reads EQERNAEEERRDDPEEMDAEVE. Leucine 60 is modified (leucine amide).

In terms of tissue distribution, expressed by the skin glands.

The protein resides in the secreted. Has antimicrobial activity against some Gram-positive bacteria and fungi but has no activity against a range of Gram-negative bacteria except P.faecalis. Active against the Gram-positive bacteria S.aureus ATCC 25923 (MIC=37.5 uM), S.carnosus KHS (MIC=37.5 uM), B.licheniformis X39 (MIC=19 uM), R.rhodochrous X15 (MIC=4.8 uM), is virtually inactive against E.faecalis 981 (MIC=150 uM) and inactive against E.faecium 091299. Has some antimicrobial activity against the Gram-negative bacterium P.faecalis X29 (MIC=75 uM) and is inactive against E.coli, P.aeruginosa and S.typhi. Has antifungal activity against C.albicans ATCC 2002 (MIC=19 uM) and lower activity against the slime mold 090223 (MIC=75 uM). Has low hemolytic activity against human erythrocytes (LC(50)=75 uM). This chain is Temporin-HN1, found in Odorrana hainanensis (Odor frog).